The following is a 236-amino-acid chain: CHD1 helical C-terminal domain containing protein 1 (236 aa).

Residues Met1 to Ser29 are disordered. A CHD1 helical C-terminal domain (CHCT) region spans residues Leu44–Ala145. A disordered region spans residues Leu197–Ser236. Over residues Glu198–Arg212 the composition is skewed to basic and acidic residues. A compositionally biased stretch (basic residues) spans Leu214–Lys226. Positions Glu227–Ser236 are enriched in basic and acidic residues.

Exclusively expressed in testes.

The protein resides in the cytoplasm. It localises to the nucleus. In terms of biological role, may play a role in regulation of apoptosis. The polypeptide is CHD1 helical C-terminal domain containing protein 1 (Chct1) (Mus musculus (Mouse)).